The following is a 1044-amino-acid chain: Integrin alpha-V (1044 aa).

The N-terminal stretch at 1–30 (MAAPGRLLLRPRPGGLLLLLPGLLLPLADA) is a signal peptide. Topologically, residues 31–988 (FNLDVESPAE…WGIQPAPMPV (958 aa)) are extracellular. 7 FG-GAP repeats span residues 32-98 (NLDV…RRCQ), 109-170 (DYAK…VEYA), 173-225 (RSKN…ISKY), 237-291 (QLAT…GKNM), 292-357 (SSLH…GDFQ), 358-415 (TTKL…GLNS), and 419-482 (QILE…VYPS). Asn74 is a glycosylation site (N-linked (GlcNAc...) asparagine). 3 disulfide bridges follow: Cys89/Cys97, Cys138/Cys158, and Cys172/Cys185. Asp260, Asn262, Asp264, Ile266, and Asp268 together coordinate Ca(2+). N-linked (GlcNAc...) asparagine glycans are attached at residues Asn290 and Asn296. Positions 314, 316, 318, 320, 322, 379, 381, 383, 385, 387, 443, 445, 447, 449, and 451 each coordinate Ca(2+). Cystine bridges form between Cys491-Cys502 and Cys508-Cys565. Residue Asn615 is glycosylated (N-linked (GlcNAc...) asparagine). Intrachain disulfides connect Cys626–Cys632 and Cys698–Cys711. N-linked (GlcNAc...) asparagine glycans are attached at residues Asn704, Asn835, Asn851, and Asn869. Intrachain disulfides connect Cys852/Cys910 and Cys900/Cys905. Asn941, Asn969, and Asn976 each carry an N-linked (GlcNAc...) asparagine glycan. A helical membrane pass occupies residues 989–1012 (PVWVIILAVLAGLLLLAVLVFVMY). The Cytoplasmic segment spans residues 1013 to 1044 (RMGFFKRVRPPQEEQEREQLQPHENGEGNSET). Positions 1015-1019 (GFFKR) match the GFFKR motif motif. The span at 1023–1038 (PQEEQEREQLQPHENG) shows a compositional bias: basic and acidic residues. The segment at 1023 to 1044 (PQEEQEREQLQPHENGEGNSET) is disordered.

Belongs to the integrin alpha chain family. In terms of assembly, heterodimer of an alpha and a beta subunit. The alpha subunit is composed of a heavy and a light chain linked by a disulfide bond. Alpha-V (ITGAV) associates with either beta-1 (ITGB1), beta-3 (ITGB3), beta-5 (ITGB5), beta-6 (ITGB6) or beta-8 (ITGB8). Interacts with RAB25. Interacts with CIB1. Integrins ITGAV:ITGB3 and ITGAV:ITGB5 interact with FBLN5 (via N-terminus). ITGAV:ITGB3 and ITGAV:ITGB5 interact with CCN3. ITGAV:ITGB3 interacts with ADGRA2. ITGAV:ITGB3 interacts with FGF2; it is likely that FGF2 can simultaneously bind ITGAV:ITGB3 and FGF receptors. ITGAV:ITGB3 interacts with SELP (via C-type lectin domain); the interaction mediates cell-cell interaction and adhesion. ITGAV:ITGB3 is found in a ternary complex with CX3CR1 and CX3CL1. ITGAV:ITGB3 is found in a ternary complex with NRG1 and ERBB3. ITGAV:ITGB3 is found in a ternary complex with FGF1 and FGFR1. ITGAV:ITGB3 is found in a ternary complex with IGF1 and IGF1R. ITGAV:ITGB3 interacts with IGF2. ITGAV:ITGB3 and ITGAV:ITGB6 interact with FBN1. ITGAV:ITGB3 interacts with CD9, CD81 and CD151 (via second extracellular domain). ITGAV:ITGB6 interacts with TGFB1. ITGAV:ITGB3 interacts with PTN. Forms a complex with PTPRZ1 and PTN that stimulates endothelial cell migration through ITGB3 'Tyr-773' phosphorylation. Interacts with TM4SF19.

The protein resides in the cell membrane. It is found in the cell junction. Its subcellular location is the focal adhesion. The alpha-V (ITGAV) integrins are receptors for vitronectin, cytotactin, fibronectin, fibrinogen, laminin, matrix metalloproteinase-2, osteopontin, osteomodulin, prothrombin, thrombospondin, TGFB1 and vWF. They recognize the sequence R-G-D in a wide array of ligands. Alpha-V integrins may play a role in embryo implantation, angiogenesis and wound healing. ITGAV:ITGB3 binds to fractalkine (CX3CL1) and may act as its coreceptor in CX3CR1-dependent fractalkine signaling. ITGAV:ITGB3 binds to NRG1 (via EGF domain) and this binding is essential for NRG1-ERBB signaling. ITGAV:ITGB3 binds to FGF1 and this binding is essential for FGF1 signaling. ITGAV:ITGB3 binds to FGF2 and this binding is essential for FGF2 signaling. ITGAV:ITGB3 binds to IGF1 and this binding is essential for IGF1 signaling. ITGAV:ITGB3 binds to IGF2 and this binding is essential for IGF2 signaling. ITGAV:ITGB3 binds to IL1B and this binding is essential for IL1B signaling. ITGAV:ITGB3 binds to PLA2G2A via a site (site 2) which is distinct from the classical ligand-binding site (site 1) and this induces integrin conformational changes and enhanced ligand binding to site 1. ITGAV:ITGB3 and ITGAV:ITGB6 act as a receptor for fibrillin-1 (FBN1) and mediate R-G-D-dependent cell adhesion to FBN1. Integrin alpha-V/beta-6 or alpha-V/beta-8 (ITGAV:ITGB6 or ITGAV:ITGB8) mediates R-G-D-dependent release of transforming growth factor beta-1 (TGF-beta-1) from regulatory Latency-associated peptide (LAP), thereby playing a key role in TGF-beta-1 activation. ITGAV:ITGB3 acts as a receptor for CD40LG. ITGAV:ITGB3 binds to the Lilrb4a/Gp49b receptor and enhances the Lilrb4a-mediated inhibition of mast cell activation. ITGAV:ITGB3 also suppresses marginal zone B cell antibody production through its interaction with Lilrb4a. ITGAV:ITGB3 acts as a receptor for IBSP and promotes cell adhesion and migration to IBSP. The chain is Integrin alpha-V (Itgav) from Mus musculus (Mouse).